Here is a 292-residue protein sequence, read N- to C-terminus: 4,5:9,10-diseco-3-hydroxy-5,9,17-trioxoandrosta-1(10),2-diene-4-oate hydrolase (292 aa).

Substrate-binding positions include 44 to 45, N53, N113, and R192; that span reads GG. Residue H269 is the Proton acceptor of the active site. W270 contributes to the substrate binding site.

It belongs to the AB hydrolase superfamily. HsaD family. Homodimer.

It carries out the reaction (1E,2Z)-3-hydroxy-5,9,17-trioxo-4,5:9,10-disecoandrosta-1(10),2-dien-4-oate + H2O = 3-[(3aS,4S,7aS)-7a-methyl-1,5-dioxo-octahydro-1H-inden-4-yl]propanoate + (2Z,4Z)-2-hydroxyhexa-2,4-dienoate + H(+). Its pathway is lipid metabolism; steroid biosynthesis. Its function is as follows. Catalyzes the hydrolysis of a carbon-carbon bond in 4,5: 9,10-diseco-3-hydroxy-5,9,17-trioxoandrosta-1(10),2-diene-4-oate (4,9-DSHA) to yield 9,17-dioxo-1,2,3,4,10,19-hexanorandrostan-5-oate (DOHNAA) and 2-hydroxy-hexa-2,4-dienoate (HHD). Also involved in biphenyl and polychlorinated biphenyls (PCBs) degradation. This Rhodococcus jostii (strain RHA1) protein is 4,5:9,10-diseco-3-hydroxy-5,9,17-trioxoandrosta-1(10),2-diene-4-oate hydrolase (hsaD).